The sequence spans 138 residues: Putative pre-16S rRNA nuclease (138 aa).

The protein belongs to the YqgF nuclease family.

The protein localises to the cytoplasm. In terms of biological role, could be a nuclease involved in processing of the 5'-end of pre-16S rRNA. This is Putative pre-16S rRNA nuclease from Listeria monocytogenes serovar 1/2a (strain ATCC BAA-679 / EGD-e).